Here is a 361-residue protein sequence, read N- to C-terminus: Phospho-N-acetylmuramoyl-pentapeptide-transferase (361 aa).

10 helical membrane-spanning segments follow: residues 27 to 47 (GAFF…INLL), 72 to 92 (TPTM…LLWA), 98 to 118 (YVWL…MDDF), 135 to 155 (LAMG…LHPE), 169 to 189 (TLIN…AGSA), 200 to 220 (GLAI…AYAV), 240 to 260 (IFVF…YNAP), 263 to 283 (AVFM…AIAV), 289 to 309 (IVLV…IIQV), and 338 to 358 (QIVI…LATL).

Belongs to the glycosyltransferase 4 family. MraY subfamily. It depends on Mg(2+) as a cofactor.

The protein localises to the cell inner membrane. It carries out the reaction UDP-N-acetyl-alpha-D-muramoyl-L-alanyl-gamma-D-glutamyl-meso-2,6-diaminopimeloyl-D-alanyl-D-alanine + di-trans,octa-cis-undecaprenyl phosphate = di-trans,octa-cis-undecaprenyl diphospho-N-acetyl-alpha-D-muramoyl-L-alanyl-D-glutamyl-meso-2,6-diaminopimeloyl-D-alanyl-D-alanine + UMP. Its pathway is cell wall biogenesis; peptidoglycan biosynthesis. Catalyzes the initial step of the lipid cycle reactions in the biosynthesis of the cell wall peptidoglycan: transfers peptidoglycan precursor phospho-MurNAc-pentapeptide from UDP-MurNAc-pentapeptide onto the lipid carrier undecaprenyl phosphate, yielding undecaprenyl-pyrophosphoryl-MurNAc-pentapeptide, known as lipid I. The protein is Phospho-N-acetylmuramoyl-pentapeptide-transferase of Dinoroseobacter shibae (strain DSM 16493 / NCIMB 14021 / DFL 12).